We begin with the raw amino-acid sequence, 1645 residues long: Protein MON2 homolog (1645 aa).

This sequence belongs to the MON2 family.

Its function is as follows. May be required for traffic between late Golgi and early endosomes. The sequence is that of Protein MON2 homolog from Caenorhabditis briggsae.